Consider the following 117-residue polypeptide: UPF0295 protein GK0479 (117 aa).

The next 2 helical transmembrane spans lie at Ile-12 to Phe-32 and Leu-42 to Gly-62.

This sequence belongs to the UPF0295 family.

It localises to the cell membrane. The sequence is that of UPF0295 protein GK0479 from Geobacillus kaustophilus (strain HTA426).